A 247-amino-acid polypeptide reads, in one-letter code: 5'-nucleotidase SurE (247 aa).

A divalent metal cation contacts are provided by Asp8, Asp9, Ser39, and Asn91.

This sequence belongs to the SurE nucleotidase family. A divalent metal cation serves as cofactor.

The protein resides in the cytoplasm. It catalyses the reaction a ribonucleoside 5'-phosphate + H2O = a ribonucleoside + phosphate. In terms of biological role, nucleotidase that shows phosphatase activity on nucleoside 5'-monophosphates. This Azoarcus sp. (strain BH72) protein is 5'-nucleotidase SurE.